Here is an 860-residue protein sequence, read N- to C-terminus: MATYTPMIQQYLDIKAQYPDAFLFFRLGDFYEMFFDDAIKAAQELEITLTSRDGGGEERVPMCGVPYHSAQGYIEQLISKGYKVAICEQVEDPKTAKGVVRREVVQLITPGTVMEGKGLLDKENNYLATVTMFDDGTYGFAYTDLSTGENRITLLASLDDVMNELYAIGTKEIVISSQFPEQYQQLLKERYDVTISYEDETVIPEGFTSIVEALQQDKLKITFGRLLHYIIRTQKRRLDHMQSVQVYQVDHYMKIDLYSKRNLELTETIRSKGRKGSLLWLLDETVTAMGGRLLKQWLDRPLLDRKQIERRLHMVETLIHHYFERQELRERLREVYDVERLAGRVAYGNVNARDLIQLKKSLQQIPALKDIVEKLPDHEAKQLANKLDPCSELVDLLERSIQENPPLSVKEGNIIKDGYNETLDRYRDASRNGKAWIAQLESKERELTGIKSLKIGYNRVFGYYIEVTKPNLHLLPKGRYERKQTLANAERFITQELKEKEALILEAEEKSIELEYELFVDIRERVKQYIPRLQSLAKTISELDVLQSFATVSEERHYVKPQFSDNRELIIQAGRHPVVEKVLGAQTYVPNDCYMNKERELLLITGPNMSGKSTYMRQIALTVIMAQIGCFVPAEKAVLPIFDQVFTRIGAADDLVSGQSTFMVEMLEARNAIVHATQNSLILFDEIGRGTSTYDGMALAQAIIEYIHDHIGAKTLFSTHYHELTDLEQSLAKLKNVHVRAVEENGKVVFLHKIEEGPADQSYGIHVAELAELPASLIQRAKEILAELEQQEQRKEQPSGKNEAVFEQLSMFAEEQPSKEESHLSKKEKKALEALKSVNLLETTPLEALNKLYEIQKLLK.

Position 606–613 (606–613 (GPNMSGKS)) interacts with ATP.

This sequence belongs to the DNA mismatch repair MutS family.

Its function is as follows. This protein is involved in the repair of mismatches in DNA. It is possible that it carries out the mismatch recognition step. This protein has a weak ATPase activity. This Geobacillus sp. (strain WCH70) protein is DNA mismatch repair protein MutS.